The primary structure comprises 231 residues: Dephospho-CoA kinase (231 aa).

Residues 29–231 (RVGLTGGIAS…IAGALRFDRR (203 aa)) enclose the DPCK domain. 37 to 42 (ASGKST) contacts ATP.

It belongs to the CoaE family.

It is found in the cytoplasm. It catalyses the reaction 3'-dephospho-CoA + ATP = ADP + CoA + H(+). It participates in cofactor biosynthesis; coenzyme A biosynthesis; CoA from (R)-pantothenate: step 5/5. Its function is as follows. Catalyzes the phosphorylation of the 3'-hydroxyl group of dephosphocoenzyme A to form coenzyme A. This Cutibacterium acnes (strain DSM 16379 / KPA171202) (Propionibacterium acnes) protein is Dephospho-CoA kinase.